The primary structure comprises 1049 residues: RTX-III toxin determinant A from serotype 2 (1049 aa).

3 helical membrane-spanning segments follow: residues 154–170 (TIIS…LAGI), 315–331 (ALIA…LAFL), and 397–413 (LVGA…TGLI). Hemolysin-type calcium-binding repeat units follow at residues 743 to 760 (KGSK…DDLL), 761 to 778 (NGND…NDEL), 779 to 796 (RGDN…DDKL), 797 to 814 (LGGN…NDEL), 825 to 842 (RGGK…SDLL), and 843 to 860 (DGGE…SDFY).

This sequence belongs to the RTX prokaryotic toxin (TC 1.C.11) family. In terms of processing, palmitoylated by ApxIIIC. The toxin only becomes active when modified.

Its subcellular location is the secreted. The protein resides in the host cell membrane. In terms of biological role, does not have hemolytic activity but shows a strong cytotoxicity towards alveolar macrophages and neutrophils. This is RTX-III toxin determinant A from serotype 2 (apxIIIA) from Actinobacillus pleuropneumoniae (Haemophilus pleuropneumoniae).